The sequence spans 185 residues: MLNEIFNKQKTQSEKSLEALKKDFTTLRTGKINTHILDHITVDYYGNQTPLNQVATVLASDASTISITPWEKPLLKTIESAIAAANIGVNPNNDGESVKLFFPPMTREQREENVKQAKAMGEKAKVSIRNIRKDANDAVKKLEKDKAISEDEAKKAYDEVQKLTDVYTTKIDESVKSKESELLKV.

It belongs to the RRF family.

It localises to the cytoplasm. Its function is as follows. Responsible for the release of ribosomes from messenger RNA at the termination of protein biosynthesis. May increase the efficiency of translation by recycling ribosomes from one round of translation to another. This chain is Ribosome-recycling factor, found in Campylobacter jejuni subsp. doylei (strain ATCC BAA-1458 / RM4099 / 269.97).